The primary structure comprises 642 residues: uncharacterized protein (642 aa).

Residues 1–15 (MVHITLGQAIWVSVK) are Cytoplasmic-facing. The chain crosses the membrane as a helical span at residues 16 to 36 (PIIKIYLIIGVGFLMAKMGIL). Residues 37-42 (TVEATR) lie on the Extracellular side of the membrane. A helical membrane pass occupies residues 43 to 63 (IISDIVLTVLLPSLSFNKIVA). At 64 to 73 (NIEDKDIKSV) the chain is on the cytoplasmic side. Residues 74-94 (GIICLSALLIFGSGFFFAYVV) form a helical membrane-spanning segment. Residues 95-104 (RLFLPVPKQW) lie on the Extracellular side of the membrane. A helical membrane pass occupies residues 105 to 125 (YGGILAGGMFPNISDLPIAYL). Residues 126–142 (QSMDQGLVFSEEEGNKG) lie on the Cytoplasmic side of the membrane. A helical membrane pass occupies residues 143–163 (VANVIIFLTMFLICIFNLGGF). Residues 164–460 (RLIESDFEYN…FLKNCLRPCS (297 aa)) are Extracellular-facing. 2 disordered regions span residues 183 to 206 (ETTKTQPAVSANTTNTDTSERFFS) and 227 to 324 (GTKG…SQPR). 2 stretches are compositionally biased toward polar residues: residues 240–260 (RRSTNSIAPLSLPDTSSNSKI) and 272–312 (IACT…SSID). Residues 461–481 (MAVIIALTVAFIPWVKALFVT) form a helical membrane-spanning segment. The Cytoplasmic portion of the chain corresponds to 482–499 (TANTPHISQAPDNAPPLS). A helical membrane pass occupies residues 500 to 520 (FFMDFTGYVGAACVPFGLILL). Residues 521–538 (GATLGRLKIGNLYPGFWK) lie on the Extracellular side of the membrane. The chain crosses the membrane as a helical span at residues 539 to 559 (AAVTLVILRQCVMPIFGVLWC). The Cytoplasmic segment spans residues 560–574 (DRLVKAGWVNWQDDR). A helical transmembrane segment spans residues 575 to 595 (MLLFVIAISWNLPTMTTLIYF). Topologically, residues 596 to 614 (TASFTPPETTAPIQMECVS) are extracellular. Residues 615–635 (FFLMLQYPLMVVSLPFLVSYF) traverse the membrane as a helical segment. The Cytoplasmic segment spans residues 636–642 (LKVQMNL).

The protein belongs to the auxin efflux carrier (TC 2.A.69) family.

Its subcellular location is the membrane. This is an uncharacterized protein from Saccharomyces cerevisiae (strain ATCC 204508 / S288c) (Baker's yeast).